Consider the following 792-residue polypeptide: Phenylalanine--tRNA ligase beta subunit (792 aa).

The 112-residue stretch at 39 to 150 folds into the tRNA-binding domain; the sequence is GDEITNVVTG…ENTPIGKDIK (112 aa). Residues 404 to 479 form the B5 domain; it reads SEPNIVEVDY…RIYGYNKVPS (76 aa). Positions 457, 463, 466, and 467 each coordinate Mg(2+). The 94-residue stretch at 699–792 folds into the FDX-ACB domain; it reads PKFPTVTRDI…LEHVLGAELR (94 aa).

This sequence belongs to the phenylalanyl-tRNA synthetase beta subunit family. Type 1 subfamily. In terms of assembly, tetramer of two alpha and two beta subunits. It depends on Mg(2+) as a cofactor.

It is found in the cytoplasm. It catalyses the reaction tRNA(Phe) + L-phenylalanine + ATP = L-phenylalanyl-tRNA(Phe) + AMP + diphosphate + H(+). This Clostridium acetobutylicum (strain ATCC 824 / DSM 792 / JCM 1419 / IAM 19013 / LMG 5710 / NBRC 13948 / NRRL B-527 / VKM B-1787 / 2291 / W) protein is Phenylalanine--tRNA ligase beta subunit.